Reading from the N-terminus, the 228-residue chain is Octanoyltransferase (228 aa).

One can recognise a BPL/LPL catalytic domain in the interval 31–212; the sequence is GETDGILILL…KFSEVFGIHF (182 aa). Substrate is bound by residues 76-83, 143-145, and 156-158; these read RGGKITFH, AIG, and GIA. The active-site Acyl-thioester intermediate is the Cys-174.

It belongs to the LipB family.

The protein resides in the cytoplasm. The catalysed reaction is octanoyl-[ACP] + L-lysyl-[protein] = N(6)-octanoyl-L-lysyl-[protein] + holo-[ACP] + H(+). It participates in protein modification; protein lipoylation via endogenous pathway; protein N(6)-(lipoyl)lysine from octanoyl-[acyl-carrier-protein]: step 1/2. Functionally, catalyzes the transfer of endogenously produced octanoic acid from octanoyl-acyl-carrier-protein onto the lipoyl domains of lipoate-dependent enzymes. Lipoyl-ACP can also act as a substrate although octanoyl-ACP is likely to be the physiological substrate. This chain is Octanoyltransferase, found in Thermoanaerobacter pseudethanolicus (strain ATCC 33223 / 39E) (Clostridium thermohydrosulfuricum).